The sequence spans 852 residues: Protein SEY1 (852 aa).

The Cytoplasmic portion of the chain corresponds to Met-1–Gln-738. The GB1/RHD3-type G domain maps to Gly-47–Ala-294. Position 57–64 (Gly-57–Ser-64) interacts with GTP. Residues Gln-475–Ile-500 are a coiled coil. Residues Val-739–Leu-759 traverse the membrane as a helical segment. Residues Arg-760 to Pro-762 are Lumenal-facing. Residues Phe-763–Leu-783 traverse the membrane as a helical segment. Over Leu-784 to Ile-852 the chain is Cytoplasmic.

It belongs to the TRAFAC class dynamin-like GTPase superfamily. GB1/RHD3 GTPase family. RHD3 subfamily.

Its subcellular location is the endoplasmic reticulum membrane. Functionally, cooperates with the reticulon proteins and tubule-shaping DP1 family proteins to generate and maintain the structure of the tubular endoplasmic reticulum network. Has GTPase activity, which is required for its function in ER organization. The protein is Protein SEY1 of Podospora anserina (strain S / ATCC MYA-4624 / DSM 980 / FGSC 10383) (Pleurage anserina).